Reading from the N-terminus, the 219-residue chain is Phosphoribosylformylglycinamidine synthase subunit PurQ (219 aa).

Residues 2 to 219 form the Glutamine amidotransferase type-1 domain; sequence KIAVITFPGS…KVVLDLILGS (218 aa). Cys86 serves as the catalytic Nucleophile. Residues His195 and Glu197 contribute to the active site.

In terms of assembly, part of the FGAM synthase complex composed of 1 PurL, 1 PurQ and 2 PurS subunits.

It localises to the cytoplasm. The enzyme catalyses N(2)-formyl-N(1)-(5-phospho-beta-D-ribosyl)glycinamide + L-glutamine + ATP + H2O = 2-formamido-N(1)-(5-O-phospho-beta-D-ribosyl)acetamidine + L-glutamate + ADP + phosphate + H(+). The catalysed reaction is L-glutamine + H2O = L-glutamate + NH4(+). It functions in the pathway purine metabolism; IMP biosynthesis via de novo pathway; 5-amino-1-(5-phospho-D-ribosyl)imidazole from N(2)-formyl-N(1)-(5-phospho-D-ribosyl)glycinamide: step 1/2. Functionally, part of the phosphoribosylformylglycinamidine synthase complex involved in the purines biosynthetic pathway. Catalyzes the ATP-dependent conversion of formylglycinamide ribonucleotide (FGAR) and glutamine to yield formylglycinamidine ribonucleotide (FGAM) and glutamate. The FGAM synthase complex is composed of three subunits. PurQ produces an ammonia molecule by converting glutamine to glutamate. PurL transfers the ammonia molecule to FGAR to form FGAM in an ATP-dependent manner. PurS interacts with PurQ and PurL and is thought to assist in the transfer of the ammonia molecule from PurQ to PurL. The protein is Phosphoribosylformylglycinamidine synthase subunit PurQ of Leptospira interrogans serogroup Icterohaemorrhagiae serovar copenhageni (strain Fiocruz L1-130).